The primary structure comprises 356 residues: Phenylalanine--tRNA ligase alpha subunit (356 aa).

E260 is a binding site for Mg(2+).

Belongs to the class-II aminoacyl-tRNA synthetase family. Phe-tRNA synthetase alpha subunit type 1 subfamily. Tetramer of two alpha and two beta subunits. Mg(2+) is required as a cofactor.

The protein localises to the cytoplasm. It carries out the reaction tRNA(Phe) + L-phenylalanine + ATP = L-phenylalanyl-tRNA(Phe) + AMP + diphosphate + H(+). In Gluconacetobacter diazotrophicus (strain ATCC 49037 / DSM 5601 / CCUG 37298 / CIP 103539 / LMG 7603 / PAl5), this protein is Phenylalanine--tRNA ligase alpha subunit.